A 211-amino-acid polypeptide reads, in one-letter code: ATP phosphoribosyltransferase (211 aa).

Belongs to the ATP phosphoribosyltransferase family. Short subfamily. Heteromultimer composed of HisG and HisZ subunits.

Its subcellular location is the cytoplasm. It carries out the reaction 1-(5-phospho-beta-D-ribosyl)-ATP + diphosphate = 5-phospho-alpha-D-ribose 1-diphosphate + ATP. The protein operates within amino-acid biosynthesis; L-histidine biosynthesis; L-histidine from 5-phospho-alpha-D-ribose 1-diphosphate: step 1/9. Its function is as follows. Catalyzes the condensation of ATP and 5-phosphoribose 1-diphosphate to form N'-(5'-phosphoribosyl)-ATP (PR-ATP). Has a crucial role in the pathway because the rate of histidine biosynthesis seems to be controlled primarily by regulation of HisG enzymatic activity. In Rippkaea orientalis (strain PCC 8801 / RF-1) (Cyanothece sp. (strain PCC 8801)), this protein is ATP phosphoribosyltransferase.